The sequence spans 292 residues: MPWLQVRLAISPEQAETYEDALLEVGAVSVTFMDAEDQPIFEPDLNTTPLWSHTHLLALFEADADPEQVFAHLRLLTGAELPEHQAEVIEDQDWERSWMDNFQPMRFGRRLWIVPSWHEAPEKDAVNLLLDPGLAFGTGTHPTTALCLEWLDGQQLDGTQVLDFGCGSGILAIAALLLGAREAVGTDIDVQAIEASRDNAQRNGVADEKLALYLPEHMPAMQADVLVANILAGPLVSLAPQLSGLVRPGGLLALSGILAEQGEEVAAAYAADFDLDPIVVRDGWVRISGRRR.

The S-adenosyl-L-methionine site is built by Thr-144, Gly-165, Asp-187, and Asn-229.

It belongs to the methyltransferase superfamily. PrmA family.

It is found in the cytoplasm. It catalyses the reaction L-lysyl-[protein] + 3 S-adenosyl-L-methionine = N(6),N(6),N(6)-trimethyl-L-lysyl-[protein] + 3 S-adenosyl-L-homocysteine + 3 H(+). Functionally, methylates ribosomal protein L11. This Pseudomonas putida (strain GB-1) protein is Ribosomal protein L11 methyltransferase.